Consider the following 233-residue polypeptide: NAD-dependent protein deacylase (233 aa).

One can recognise a Deacetylase sirtuin-type domain in the interval 1–230 (MKNIMILSGA…ALDIENFMKD (230 aa)). Residue 9–28 (GAGLSAPSGLKTFRDNDGLW) coordinates NAD(+). Tyrosine 53 and arginine 56 together coordinate substrate. An NAD(+)-binding site is contributed by 88-91 (QNVD). The Proton acceptor role is filled by histidine 106. Residues cysteine 114, cysteine 117, cysteine 133, and cysteine 136 each coordinate Zn(2+). Residues 172–174 (GTS) and isoleucine 213 contribute to the NAD(+) site.

This sequence belongs to the sirtuin family. Class III subfamily. Zn(2+) is required as a cofactor.

The protein resides in the cytoplasm. It carries out the reaction N(6)-acetyl-L-lysyl-[protein] + NAD(+) + H2O = 2''-O-acetyl-ADP-D-ribose + nicotinamide + L-lysyl-[protein]. It catalyses the reaction N(6)-succinyl-L-lysyl-[protein] + NAD(+) + H2O = 2''-O-succinyl-ADP-D-ribose + nicotinamide + L-lysyl-[protein]. NAD-dependent lysine deacetylase and desuccinylase that specifically removes acetyl and succinyl groups on target proteins. Modulates the activities of several proteins which are inactive in their acylated form. This Campylobacter jejuni (strain RM1221) protein is NAD-dependent protein deacylase.